The chain runs to 335 residues: Endo-beta-N-acetylglucosaminidase F2 (335 aa).

A signal peptide spans 1–45; that stretch reads MKTANFSFALCLSVVIMLFIKCTRSEQDLSVTKDAIAQKSGVTVS. The 261-residue stretch at 61 to 321 folds into the GH18 domain; the sequence is QISAGYYRTW…SSNDNTLRAP (261 aa). O-linked (Man...) serine glycosylation is found at serine 73, serine 89, and serine 143. The active-site Proton donor is glutamate 171.

The protein belongs to the glycosyl hydrolase 18 family. In terms of assembly, monomer. In terms of processing, carbohydrates at Ser-73, Ser-89 and Ser-143 consist of (2-OMe)Man1-4GlcNAcU1-4GlcU1-4Glc1-4(2-OMe)GlcU1-4[(2-OMe)Rham1-2]Man.

The protein localises to the secreted. It carries out the reaction an N(4)-(oligosaccharide-(1-&gt;3)-[oligosaccharide-(1-&gt;6)]-beta-D-Man-(1-&gt;4)-beta-D-GlcNAc-(1-&gt;4)-alpha-D-GlcNAc)-L-asparaginyl-[protein] + H2O = an oligosaccharide-(1-&gt;3)-[oligosaccharide-(1-&gt;6)]-beta-D-Man-(1-&gt;4)-D-GlcNAc + N(4)-(N-acetyl-beta-D-glucosaminyl)-L-asparaginyl-[protein]. In terms of biological role, endohydrolysis of the di-N-acetylchitobiosyl unit in high-mannose glycopeptides and glycoproteins. Complex biantennary glycans are the preferred substrates. Tri- and tetraantennary glycans are not hydrolyzed, and high mannose glycans are very poor substrates. The chain is Endo-beta-N-acetylglucosaminidase F2 (endOF2) from Elizabethkingia meningoseptica (Chryseobacterium meningosepticum).